A 595-amino-acid polypeptide reads, in one-letter code: Aspartate--tRNA(Asp/Asn) ligase (595 aa).

Residue Glu175 participates in L-aspartate binding. Residues 199–202 form an aspartate region; the sequence is QQFK. L-aspartate-binding residues include Arg221 and His451. 221 to 223 contacts ATP; sequence RDE. An ATP-binding site is contributed by Glu485. Arg492 is an L-aspartate binding site. 537-540 provides a ligand contact to ATP; it reads GVDR.

It belongs to the class-II aminoacyl-tRNA synthetase family. Type 1 subfamily. As to quaternary structure, homodimer.

It is found in the cytoplasm. It carries out the reaction tRNA(Asx) + L-aspartate + ATP = L-aspartyl-tRNA(Asx) + AMP + diphosphate. In terms of biological role, aspartyl-tRNA synthetase with relaxed tRNA specificity since it is able to aspartylate not only its cognate tRNA(Asp) but also tRNA(Asn). Reaction proceeds in two steps: L-aspartate is first activated by ATP to form Asp-AMP and then transferred to the acceptor end of tRNA(Asp/Asn). In Acidiphilium cryptum (strain JF-5), this protein is Aspartate--tRNA(Asp/Asn) ligase.